A 151-amino-acid polypeptide reads, in one-letter code: FUN14 domain-containing protein 1 (151 aa).

A YXXL motif is present at residues 14–17 (YEVL). 3 consecutive transmembrane segments (helical) span residues 44 to 64 (YSVATQIVMGGVSGWCAGFLF), 71 to 91 (AATAVGGGFLLLQIASHGGYI), and 130 to 150 (FIKKNIVVSGGFVGGFLLGLA).

Belongs to the FUN14 family.

The protein resides in the mitochondrion outer membrane. In terms of biological role, acts as an activator of hypoxia-induced mitophagy, an important mechanism for mitochondrial quality control. This is FUN14 domain-containing protein 1 (fundc1) from Xenopus tropicalis (Western clawed frog).